The primary structure comprises 372 residues: NAD(P)H-quinone oxidoreductase subunit 1 (372 aa).

The next 8 membrane-spanning stretches (helical) occupy residues 27–47 (LIWL…GVLV), 97–117 (LLFT…WLIV), 128–148 (VGVG…GLLM), 166–186 (AAQS…VVMM), 204–224 (ILSW…ICAL), 266–286 (VLSA…PVPV), 308–328 (ATGI…AILL), and 347–367 (FLLP…LAFP).

This sequence belongs to the complex I subunit 1 family. In terms of assembly, NDH-1 is composed of at least 11 different subunits.

It is found in the cellular thylakoid membrane. The enzyme catalyses a plastoquinone + NADH + (n+1) H(+)(in) = a plastoquinol + NAD(+) + n H(+)(out). It catalyses the reaction a plastoquinone + NADPH + (n+1) H(+)(in) = a plastoquinol + NADP(+) + n H(+)(out). NDH-1 shuttles electrons from an unknown electron donor, via FMN and iron-sulfur (Fe-S) centers, to quinones in the respiratory and/or the photosynthetic chain. The immediate electron acceptor for the enzyme in this species is believed to be plastoquinone. Couples the redox reaction to proton translocation, and thus conserves the redox energy in a proton gradient. In Synechococcus sp. (strain WH7803), this protein is NAD(P)H-quinone oxidoreductase subunit 1.